A 102-amino-acid chain; its full sequence is Small ribosomal subunit protein uS10 (102 aa).

The protein belongs to the universal ribosomal protein uS10 family. In terms of assembly, part of the 30S ribosomal subunit.

Functionally, involved in the binding of tRNA to the ribosomes. This is Small ribosomal subunit protein uS10 (rpsJ) from Bacillus subtilis (strain 168).